Reading from the N-terminus, the 1405-residue chain is ATP-dependent helicase/nuclease subunit A (1405 aa).

Residues 7-482 (REWTPDQLAA…ILLKANFRSR (476 aa)) enclose the UvrD-like helicase ATP-binding domain. 28–35 (AAAGAGKT) is a binding site for ATP. The region spanning 551–914 (PEAVGAGKGG…RVMSIHRAKG (364 aa)) is the UvrD-like helicase C-terminal domain. 2 disordered regions span residues 778–797 (QEPW…KAVP) and 1132–1165 (AGKT…QDET). Positions 787–796 (GPGAAAGKAV) are enriched in low complexity.

The protein belongs to the helicase family. AddA subfamily. In terms of assembly, heterodimer of AddA and AddB/RexB. Mg(2+) is required as a cofactor.

It carries out the reaction Couples ATP hydrolysis with the unwinding of duplex DNA by translocating in the 3'-5' direction.. The enzyme catalyses ATP + H2O = ADP + phosphate + H(+). Its function is as follows. The heterodimer acts as both an ATP-dependent DNA helicase and an ATP-dependent, dual-direction single-stranded exonuclease. Recognizes the chi site generating a DNA molecule suitable for the initiation of homologous recombination. The AddA nuclease domain is required for chi fragment generation; this subunit has the helicase and 3' -&gt; 5' nuclease activities. The protein is ATP-dependent helicase/nuclease subunit A of Moorella thermoacetica (strain ATCC 39073 / JCM 9320).